Consider the following 260-residue polypeptide: Flap endonuclease Xni (260 aa).

D104 is a binding site for Mg(2+). The region spanning V160–P250 is the 5'-3' exonuclease domain. Positions 171, 172, 180, 182, and 185 each coordinate K(+). An interaction with DNA region spans residues G184–S189.

Belongs to the Xni family. Mg(2+) is required as a cofactor. The cofactor is K(+).

Has flap endonuclease activity. During DNA replication, flap endonucleases cleave the 5'-overhanging flap structure that is generated by displacement synthesis when DNA polymerase encounters the 5'-end of a downstream Okazaki fragment. The sequence is that of Flap endonuclease Xni from Pectobacterium atrosepticum (strain SCRI 1043 / ATCC BAA-672) (Erwinia carotovora subsp. atroseptica).